A 391-amino-acid chain; its full sequence is Autotransporter heptosyltransferase Aah (391 aa).

ADP-D-glycero-beta-D-manno-heptose is bound by residues Thr101, Leu102, and Gly103. Asp104 functions as the Proton acceptor in the catalytic mechanism. 7 residues coordinate ADP-D-glycero-beta-D-manno-heptose: Gln218, Thr220, Lys224, Arg251, Leu275, Gly296, and Glu320. Fe(3+) is bound by residues Cys333, Cys336, Cys352, and Cys364.

This sequence belongs to the glycosyltransferase 9 family. Homododecamer composed of 6 homodimers forming a ring. Fe(3+) is required as a cofactor.

Its subcellular location is the cytoplasm. It catalyses the reaction ADP-D-glycero-beta-D-manno-heptose + L-seryl-[protein] = O-(D-glycero-alpha-D-manno-heptosyl)-L-seryl-[protein] + ADP + H(+). It carries out the reaction ADP-L-glycero-beta-D-manno-heptose + L-seryl-[protein] = O-(L-glycero-alpha-D-manno-heptosyl)-L-seryl-[protein] + ADP + H(+). Its function is as follows. Glycosylates autotransporter AIDA-I. Catalyzes the addition of both L, D-heptose and D, D-heptose sugars. Probably by glycosylating AIDA-I, involved in bacteria adhesion to host mammalian cells. The polypeptide is Autotransporter heptosyltransferase Aah (Escherichia coli).